The primary structure comprises 184 residues: J-type co-chaperone JAC1, mitochondrial (184 aa).

Residues 1–10 (MLKYLVQRRF) constitute a mitochondrion transit peptide. Positions 13-82 (TFYELFPKTF…LRRSQYMLKL (70 aa)) constitute a J domain. Positions 48-50 (HPD) match the HSP70 binding motif. The tract at residues 71–184 (DPLRRSQYML…APGKQLEMNH (114 aa)) is interaction with ISU1.

This sequence belongs to the HscB family. Interacts with ISU1 and SSQ1.

It localises to the mitochondrion matrix. Functionally, co-chaperone required for the assembly of iron-sulfur (Fe/S) clusters in mitochondria. Stimulates the ATPase activity of its specialized Hsp70 chaperone partner SSQ1, to mediate the transfer of iron-sulfur clusters from ISU1 to GRX5. Binds to the substrate protein ISU1 and targets it to SSQ1. In Saccharomyces cerevisiae (strain ATCC 204508 / S288c) (Baker's yeast), this protein is J-type co-chaperone JAC1, mitochondrial.